The sequence spans 76 residues: Acyl carrier protein (76 aa).

Residues 2 to 76 (SNIEERVIKV…QSAIDFVKSR (75 aa)) enclose the Carrier domain. Ser37 is modified (O-(pantetheine 4'-phosphoryl)serine).

The protein belongs to the acyl carrier protein (ACP) family. Post-translationally, 4'-phosphopantetheine is transferred from CoA to a specific serine of apo-ACP by AcpS. This modification is essential for activity because fatty acids are bound in thioester linkage to the sulfhydryl of the prosthetic group.

It localises to the cytoplasm. It participates in lipid metabolism; fatty acid biosynthesis. In terms of biological role, carrier of the growing fatty acid chain in fatty acid biosynthesis. The protein is Acyl carrier protein of Dichelobacter nodosus (strain VCS1703A).